A 147-amino-acid chain; its full sequence is MSFNANLDTLYRQVIMDHYKNPRNKGVLNDSIVVDMNNPTCGDRIRLTMKLDGDIVEDAKFEGEGCSISMASASMMTQAIKGKDIETALSMSKIFSDMMQGKEYDDSIDLGDIEALQGVSKFPARIKCATLSWKALEKGVAKEEGGN.

Residues Cys41, Asp43, Cys66, and Cys128 each contribute to the Zn(2+) site.

Belongs to the NifU family. As to quaternary structure, interacts with SufS; this interaction enhances SufS cysteine desulfurase activity. Interacts with frataxin/Fra. The cofactor is Zn(2+).

In terms of biological role, part of the SUF-like system that mediates the biosynthesis of iron-sulfur (Fe-S) clusters. Acts as a sulfurtransferase and thus transfers sulfur from SufS to SufB. Mechanistically, the transfer from SufS to SufU is triggered by zinc-ligand swapping that provides a free thiol from SufU to accept sulfur from SufS. The protein is Zinc-dependent sulfurtransferase SufU (sufU) of Bacillus subtilis (strain 168).